The following is a 306-amino-acid chain: Aspartate carbamoyltransferase catalytic subunit (306 aa).

The carbamoyl phosphate site is built by arginine 55 and threonine 56. Lysine 84 provides a ligand contact to L-aspartate. The carbamoyl phosphate site is built by arginine 105, histidine 133, and glutamine 136. 2 residues coordinate L-aspartate: arginine 166 and arginine 227. Residues leucine 265 and proline 266 each coordinate carbamoyl phosphate.

It belongs to the aspartate/ornithine carbamoyltransferase superfamily. ATCase family. In terms of assembly, heterododecamer (2C3:3R2) of six catalytic PyrB chains organized as two trimers (C3), and six regulatory PyrI chains organized as three dimers (R2).

The enzyme catalyses carbamoyl phosphate + L-aspartate = N-carbamoyl-L-aspartate + phosphate + H(+). Its pathway is pyrimidine metabolism; UMP biosynthesis via de novo pathway; (S)-dihydroorotate from bicarbonate: step 2/3. Functionally, catalyzes the condensation of carbamoyl phosphate and aspartate to form carbamoyl aspartate and inorganic phosphate, the committed step in the de novo pyrimidine nucleotide biosynthesis pathway. The polypeptide is Aspartate carbamoyltransferase catalytic subunit (Neisseria meningitidis serogroup C (strain 053442)).